Reading from the N-terminus, the 435-residue chain is Glutamine synthetase (435 aa).

The GS beta-grasp domain maps to 12-94; the sequence is KSIKYFMISY…VAADCVMDDR (83 aa). A GS catalytic domain is found at 100–435; the sequence is PRVVLKRLVA…QWERDSTLDI (336 aa). Mg(2+)-binding residues include glutamate 123, glutamate 125, glutamate 180, and glutamate 187. Residue glycine 232 coordinates L-glutamate. Histidine 236 provides a ligand contact to Mg(2+). Serine 240 provides a ligand contact to ATP. L-glutamate-binding residues include arginine 291 and arginine 315. ATP contacts are provided by arginine 315 and arginine 320. Glutamate 328 is a Mg(2+) binding site. Arginine 330 is a binding site for L-glutamate.

This sequence belongs to the glutamine synthetase family. In terms of assembly, homooctamer. Mg(2+) serves as cofactor.

It carries out the reaction L-glutamate + NH4(+) + ATP = L-glutamine + ADP + phosphate + H(+). Its function is as follows. Catalyzes the ATP-dependent biosynthesis of glutamine from glutamate and ammonia. This is Glutamine synthetase from Rhizobium leguminosarum bv. phaseoli.